The chain runs to 201 residues: Protein GrpE (201 aa).

It belongs to the GrpE family. As to quaternary structure, homodimer.

Its subcellular location is the cytoplasm. Its function is as follows. Participates actively in the response to hyperosmotic and heat shock by preventing the aggregation of stress-denatured proteins, in association with DnaK and GrpE. It is the nucleotide exchange factor for DnaK and may function as a thermosensor. Unfolded proteins bind initially to DnaJ; upon interaction with the DnaJ-bound protein, DnaK hydrolyzes its bound ATP, resulting in the formation of a stable complex. GrpE releases ADP from DnaK; ATP binding to DnaK triggers the release of the substrate protein, thus completing the reaction cycle. Several rounds of ATP-dependent interactions between DnaJ, DnaK and GrpE are required for fully efficient folding. The chain is Protein GrpE from Shewanella frigidimarina (strain NCIMB 400).